A 166-amino-acid chain; its full sequence is Ribosome maturation factor RimM (166 aa).

The PRC barrel domain occupies 92-164; it reads EGVYYDFQLI…KIIIDPIPGL (73 aa).

It belongs to the RimM family. Binds ribosomal protein uS19.

It localises to the cytoplasm. Functionally, an accessory protein needed during the final step in the assembly of 30S ribosomal subunit, possibly for assembly of the head region. Essential for efficient processing of 16S rRNA. May be needed both before and after RbfA during the maturation of 16S rRNA. It has affinity for free ribosomal 30S subunits but not for 70S ribosomes. The polypeptide is Ribosome maturation factor RimM (Dehalococcoides mccartyi (strain CBDB1)).